Here is a 173-residue protein sequence, read N- to C-terminus: Putative metal-dependent hydrolase BT9727_2476 (173 aa).

3 residues coordinate Zn(2+): His-65, His-156, and His-160.

Belongs to the metal hydrolase YfiT family. Homodimer. Zn(2+) is required as a cofactor.

It localises to the cytoplasm. Its function is as follows. Possible metal-dependent hydrolase. In Bacillus thuringiensis subsp. konkukian (strain 97-27), this protein is Putative metal-dependent hydrolase BT9727_2476.